The following is a 257-amino-acid chain: BTB/POZ domain-containing protein KCTD1 (257 aa).

The segment at 1–25 is disordered; sequence MSRPLITRSPASPLNNQGIPTPAQL. A phosphoserine mark is found at Ser-9 and Ser-12. The span at 9–25 shows a compositional bias: polar residues; sequence SPASPLNNQGIPTPAQL. The BTB domain occupies 30–100; the sequence is APVHIDVGGH…LRTSKLLIPD (71 aa).

Forms homopentamers. Interacts with KCTD15, probably forming heteropentamers depending on its abundance in a cell-type dependent manner. Interacts with TFAP2A, TFAP2B and TFAP2C via the BTB domain. Sumoylated. As to expression, expressed in mammary gland, kidney, brain and ovary.

The protein localises to the nucleus. May repress the transcriptional activity of AP-2 family members, including TFAP2A, TFAP2B and TFAP2C to various extent. The polypeptide is BTB/POZ domain-containing protein KCTD1 (KCTD1) (Homo sapiens (Human)).